A 221-amino-acid polypeptide reads, in one-letter code: Probable molybdenum cofactor guanylyltransferase (221 aa).

GTP contacts are provided by residues 17–19 (LAG), Lys-29, Asp-74, and Asp-103. Asp-103 contacts Mg(2+).

It belongs to the MobA family. The cofactor is Mg(2+).

It is found in the cytoplasm. The enzyme catalyses Mo-molybdopterin + GTP + H(+) = Mo-molybdopterin guanine dinucleotide + diphosphate. Its function is as follows. Transfers a GMP moiety from GTP to Mo-molybdopterin (Mo-MPT) cofactor (Moco or molybdenum cofactor) to form Mo-molybdopterin guanine dinucleotide (Mo-MGD) cofactor. This Peptoclostridium acidaminophilum (Eubacterium acidaminophilum) protein is Probable molybdenum cofactor guanylyltransferase.